The sequence spans 490 residues: Glutamate--tRNA ligase (490 aa).

The 'HIGH' region motif lies at 10-20; the sequence is PSPTGRMHVGN. 4 residues coordinate Zn(2+): Cys-109, Cys-111, Cys-140, and His-142. The short motif at 257–261 is the 'KMSKS' region element; sequence KLSKR. Lys-260 contributes to the ATP binding site.

Belongs to the class-I aminoacyl-tRNA synthetase family. Glutamate--tRNA ligase type 1 subfamily. As to quaternary structure, monomer. Zn(2+) is required as a cofactor.

The protein resides in the cytoplasm. The catalysed reaction is tRNA(Glu) + L-glutamate + ATP = L-glutamyl-tRNA(Glu) + AMP + diphosphate. Its function is as follows. Catalyzes the attachment of glutamate to tRNA(Glu) in a two-step reaction: glutamate is first activated by ATP to form Glu-AMP and then transferred to the acceptor end of tRNA(Glu). This is Glutamate--tRNA ligase from Lachnoclostridium phytofermentans (strain ATCC 700394 / DSM 18823 / ISDg) (Clostridium phytofermentans).